Consider the following 223-residue polypeptide: DNA mismatch repair protein MutH (223 aa).

This sequence belongs to the MutH family.

Its subcellular location is the cytoplasm. Its function is as follows. Sequence-specific endonuclease that cleaves unmethylated GATC sequences. It is involved in DNA mismatch repair. The polypeptide is DNA mismatch repair protein MutH (Shewanella baltica (strain OS195)).